Here is a 148-residue protein sequence, read N- to C-terminus: Gas vesicle protein J (148 aa).

Disordered stretches follow at residues 1–21 (MTTT…VIPT) and 118–148 (EETT…QLEA). The segment covering 136 to 148 (VNSQEGDNSQLEA) has biased composition (polar residues).

The protein belongs to the gas vesicle GvpA family. As to quaternary structure, interacts with GvpA.

It localises to the gas vesicle. Functionally, a minor component of the gas vesicle, might be involved in nucleating gas vesicle formation. Gas vesicles (GV) are hollow, gas filled proteinaceous nanostructures. During planktonic growth they allow positioning of the organism at a favorable depth for light or nutrient acquisition. In terms of biological role, cluster expression in E.coli (gvpA1-gvpA2-gvpC-gvpN-gvpJ-gvpK-gvpF-gvpG-gvpV-gvpW) allows cells to float and produces irregularly shaped gas vesicles. The sequence is that of Gas vesicle protein J from Nostoc sp. (strain PCC 7120 / SAG 25.82 / UTEX 2576).